A 62-amino-acid chain; its full sequence is MTIAFQLAVFALIAISFLLVIGVPVVLASPEGWSSNKNVVFSGASLWIGLVFLVGILNSFIS.

The next 2 helical transmembrane spans lie at Ala8–Ala28 and Phe41–Ile61.

It belongs to the PsbZ family. PSII is composed of 1 copy each of membrane proteins PsbA, PsbB, PsbC, PsbD, PsbE, PsbF, PsbH, PsbI, PsbJ, PsbK, PsbL, PsbM, PsbT, PsbY, PsbZ, Psb30/Ycf12, at least 3 peripheral proteins of the oxygen-evolving complex and a large number of cofactors. It forms dimeric complexes.

It localises to the plastid. The protein resides in the chloroplast thylakoid membrane. Functionally, may control the interaction of photosystem II (PSII) cores with the light-harvesting antenna, regulates electron flow through the 2 photosystem reaction centers. PSII is a light-driven water plastoquinone oxidoreductase, using light energy to abstract electrons from H(2)O, generating a proton gradient subsequently used for ATP formation. This is Photosystem II reaction center protein Z from Marchantia polymorpha (Common liverwort).